A 492-amino-acid polypeptide reads, in one-letter code: Cytochrome P450 2A2 (492 aa).

Cysteine 437 lines the heme pocket.

The protein belongs to the cytochrome P450 family. It depends on heme as a cofactor. Liver specific.

The protein resides in the endoplasmic reticulum membrane. It localises to the microsome membrane. It catalyses the reaction an organic molecule + reduced [NADPH--hemoprotein reductase] + O2 = an alcohol + oxidized [NADPH--hemoprotein reductase] + H2O + H(+). In terms of biological role, highly active in the 15-alpha-hydroxylation of testosterone. This chain is Cytochrome P450 2A2 (Cyp2a2), found in Rattus norvegicus (Rat).